The sequence spans 47 residues: Photosystem II reaction center protein Psb30 (47 aa).

Residues 19–39 (VIFQLLSVALIVIAGPVVIFL) traverse the membrane as a helical segment.

This sequence belongs to the Psb30/Ycf12 family. PSII is composed of 1 copy each of membrane proteins PsbA, PsbB, PsbC, PsbD, PsbE, PsbF, PsbH, PsbI, PsbJ, PsbK, PsbL, PsbM, PsbT, PsbX, PsbY, PsbZ, Psb30/Ycf12, peripheral proteins PsbO, CyanoQ (PsbQ), PsbU, PsbV and a large number of cofactors. It forms dimeric complexes.

Its subcellular location is the cellular thylakoid membrane. Its function is as follows. A core subunit of photosystem II (PSII), probably helps stabilize the reaction center. The polypeptide is Photosystem II reaction center protein Psb30 (Nostoc punctiforme (strain ATCC 29133 / PCC 73102)).